Here is a 60-residue protein sequence, read N- to C-terminus: Large ribosomal subunit protein bL32 (60 aa).

Positions 1–23 (MAKHPVPKKKTSKSKRDMRRSHH) are enriched in basic residues. The tract at residues 1–34 (MAKHPVPKKKTSKSKRDMRRSHHALTAPNLTECP) is disordered. Zn(2+) contacts are provided by C33, C36, C46, and C49. The C4-type zinc-finger motif lies at 33–49 (CPQCHGKKLSHHICPNC).

It belongs to the bacterial ribosomal protein bL32 family. In terms of assembly, part of the 50S ribosomal subunit. Contacts proteins L17 and L22. Zn(2+) serves as cofactor.

Forms a cluster with L17 and L22, and with L22, a pair of 'tweezers' that hold together all the domains of the 23S rRNA. Interacts with the antibiotic troleandomycin which blocks the peptide exit tunnel. The protein is Large ribosomal subunit protein bL32 (rpmF) of Deinococcus radiodurans (strain ATCC 13939 / DSM 20539 / JCM 16871 / CCUG 27074 / LMG 4051 / NBRC 15346 / NCIMB 9279 / VKM B-1422 / R1).